The chain runs to 437 residues: Type II methylase M.HgiEI (437 aa).

The region spanning 4–431 (FRFIDLFAGI…KRLQCVKLFE (428 aa)) is the SAM-dependent MTase C5-type domain. Residue cysteine 75 is part of the active site.

The protein belongs to the class I-like SAM-binding methyltransferase superfamily. C5-methyltransferase family.

The enzyme catalyses a 2'-deoxycytidine in DNA + S-adenosyl-L-methionine = a 5-methyl-2'-deoxycytidine in DNA + S-adenosyl-L-homocysteine + H(+). A methylase that recognizes the double-stranded sequence 5'-GGWCC-3', methylates C-? on both strands, and protects the DNA from cleavage by the HgiEI endonuclease. This system is more active than isoschizomeric RM.HgiBI. This chain is Type II methylase M.HgiEI, found in Herpetosiphon aurantiacus (Herpetosiphon giganteus).